The primary structure comprises 146 residues: Early E3 16 kDa glycoprotein (146 aa).

N51 and N84 each carry an N-linked (GlcNAc...) asparagine; by host glycan.

Functionally, E3 proteins seem to be dispensable for virus growth in tissue culture cells. They are potentially important for virus growth under special conditions; E3 region may help adenoviruses to evade the immune surveillance of the host. The sequence is that of Early E3 16 kDa glycoprotein from Human adenovirus B serotype 3 (HAdV-3).